Consider the following 366-residue polypeptide: 3-dehydroquinate synthase (366 aa).

NAD(+) is bound by residues 75–80 (DGEQYK), 109–113 (GVIGD), 133–134 (TT), Lys146, Lys155, and 173–176 (CLST). Zn(2+) contacts are provided by Glu188, His251, and His268.

It belongs to the sugar phosphate cyclases superfamily. Dehydroquinate synthase family. Requires NAD(+) as cofactor. It depends on Co(2+) as a cofactor. Zn(2+) serves as cofactor.

It localises to the cytoplasm. It catalyses the reaction 7-phospho-2-dehydro-3-deoxy-D-arabino-heptonate = 3-dehydroquinate + phosphate. It functions in the pathway metabolic intermediate biosynthesis; chorismate biosynthesis; chorismate from D-erythrose 4-phosphate and phosphoenolpyruvate: step 2/7. Its function is as follows. Catalyzes the conversion of 3-deoxy-D-arabino-heptulosonate 7-phosphate (DAHP) to dehydroquinate (DHQ). The protein is 3-dehydroquinate synthase of Vibrio parahaemolyticus serotype O3:K6 (strain RIMD 2210633).